Reading from the N-terminus, the 371-residue chain is Queuine tRNA-ribosyltransferase (371 aa).

Asp-93 (proton acceptor) is an active-site residue. Residues 93–97 (DSGGF), Asp-147, Gln-191, and Gly-218 contribute to the substrate site. An RNA binding region spans residues 249–255 (GVGTPLD). The active-site Nucleophile is the Asp-268. Residues 273-277 (TRNAR) are RNA binding; important for wobble base 34 recognition. Residues Cys-306, Cys-308, Cys-311, and His-337 each coordinate Zn(2+).

Belongs to the queuine tRNA-ribosyltransferase family. As to quaternary structure, homodimer. Within each dimer, one monomer is responsible for RNA recognition and catalysis, while the other monomer binds to the replacement base PreQ1. Requires Zn(2+) as cofactor.

The enzyme catalyses 7-aminomethyl-7-carbaguanine + guanosine(34) in tRNA = 7-aminomethyl-7-carbaguanosine(34) in tRNA + guanine. It functions in the pathway tRNA modification; tRNA-queuosine biosynthesis. Its function is as follows. Catalyzes the base-exchange of a guanine (G) residue with the queuine precursor 7-aminomethyl-7-deazaguanine (PreQ1) at position 34 (anticodon wobble position) in tRNAs with GU(N) anticodons (tRNA-Asp, -Asn, -His and -Tyr). Catalysis occurs through a double-displacement mechanism. The nucleophile active site attacks the C1' of nucleotide 34 to detach the guanine base from the RNA, forming a covalent enzyme-RNA intermediate. The proton acceptor active site deprotonates the incoming PreQ1, allowing a nucleophilic attack on the C1' of the ribose to form the product. After dissociation, two additional enzymatic reactions on the tRNA convert PreQ1 to queuine (Q), resulting in the hypermodified nucleoside queuosine (7-(((4,5-cis-dihydroxy-2-cyclopenten-1-yl)amino)methyl)-7-deazaguanosine). The polypeptide is Queuine tRNA-ribosyltransferase (Lawsonia intracellularis (strain PHE/MN1-00)).